The primary structure comprises 371 residues: Rab9 effector protein with kelch motifs (371 aa).

Kelch repeat units follow at residues 47-93, 98-144, 149-201, 202-251, 252-301, and 348-371; these read RVLL…FLSA, RLWV…TSSA, CLYV…AVGT, KLFI…VFKD, HLYI…VIPW, and LLLI…SLIE.

Its function is as follows. Rab9 effector required for endosome to trans-Golgi network (TGN) transport. In Gallus gallus (Chicken), this protein is Rab9 effector protein with kelch motifs (RABEPK).